Consider the following 271-residue polypeptide: Probable short-chain type dehydrogenase/reductase VdlC (271 aa).

Residue M1 to K25 coordinates NAD(+). A substrate-binding site is contributed by S129. Y142 functions as the Proton acceptor in the catalytic mechanism.

This sequence belongs to the short-chain dehydrogenases/reductases (SDR) family.

The chain is Probable short-chain type dehydrogenase/reductase VdlC (vdlC) from Helicobacter pylori (strain J99 / ATCC 700824) (Campylobacter pylori J99).